The sequence spans 765 residues: LPS-assembly protein LptD (765 aa).

The N-terminal stretch at 1–18 (MQIRYLLALSLLPKLVLA) is a signal peptide.

Belongs to the LptD family. Component of the lipopolysaccharide transport and assembly complex. Interacts with LptE and LptA.

The protein resides in the cell outer membrane. Functionally, together with LptE, is involved in the assembly of lipopolysaccharide (LPS) at the surface of the outer membrane. The chain is LPS-assembly protein LptD from Shewanella oneidensis (strain ATCC 700550 / JCM 31522 / CIP 106686 / LMG 19005 / NCIMB 14063 / MR-1).